The following is a 292-amino-acid chain: Elongation factor Ts (292 aa).

The segment at 81–84 (TDFV) is involved in Mg(2+) ion dislocation from EF-Tu.

This sequence belongs to the EF-Ts family.

The protein resides in the cytoplasm. Functionally, associates with the EF-Tu.GDP complex and induces the exchange of GDP to GTP. It remains bound to the aminoacyl-tRNA.EF-Tu.GTP complex up to the GTP hydrolysis stage on the ribosome. The polypeptide is Elongation factor Ts (Psychromonas ingrahamii (strain DSM 17664 / CCUG 51855 / 37)).